We begin with the raw amino-acid sequence, 215 residues long: Adenylate kinase (215 aa).

10-15 (GAGKGT) contributes to the ATP binding site. Positions 30 to 59 (STGDMLREAVAAGTELGKKVKEIIEKGLLV) are NMP. AMP contacts are provided by residues Thr31, Arg36, 57 to 59 (LLV), 85 to 88 (GFPR), and Gln92. The interval 126–163 (SRRVCPSCGKVYNLLTIKPKNDMLCDDCNIGLIQREDD) is LID. ATP is bound at residue Arg127. Zn(2+) is bound by residues Cys130 and Cys133. 136–137 (VY) contacts ATP. Zn(2+) is bound by residues Cys150 and Cys153. Residues Arg160 and Arg171 each contribute to the AMP site. ATP is bound at residue Leu199.

The protein belongs to the adenylate kinase family. Monomer.

It localises to the cytoplasm. The catalysed reaction is AMP + ATP = 2 ADP. The protein operates within purine metabolism; AMP biosynthesis via salvage pathway; AMP from ADP: step 1/1. In terms of biological role, catalyzes the reversible transfer of the terminal phosphate group between ATP and AMP. Plays an important role in cellular energy homeostasis and in adenine nucleotide metabolism. The sequence is that of Adenylate kinase from Kosmotoga olearia (strain ATCC BAA-1733 / DSM 21960 / TBF 19.5.1).